An 85-amino-acid polypeptide reads, in one-letter code: Cytochrome c2 (85 aa).

Heme c is bound by residues Cys12, Cys15, His16, and Met61.

Belongs to the cytochrome c family. Binds 1 heme c group covalently per subunit.

Its function is as follows. Cytochrome c2 is found mainly in purple, non-sulfur, photosynthetic bacteria where it functions as the electron donor to the oxidized bacteriochlorophyll in the photophosphorylation pathway. However, it may also have a role in the respiratory chain and is found in some non-photosynthetic bacteria. This is Cytochrome c2 from Rubrivivax gelatinosus (Rhodocyclus gelatinosus).